We begin with the raw amino-acid sequence, 313 residues long: Cytochrome f (313 aa).

The N-terminal stretch at 1 to 31 (MQNMFSFLSNKKIIALFLIIGTIFMPLSSEA) is a signal peptide. Heme contacts are provided by tyrosine 32, cysteine 52, cysteine 55, and histidine 56. The chain crosses the membrane as a helical span at residues 279-298 (IKWLIAFLILSTLGQVFLVL).

This sequence belongs to the cytochrome f family. As to quaternary structure, the 4 large subunits of the cytochrome b6-f complex are cytochrome b6, subunit IV (17 kDa polypeptide, petD), cytochrome f and the Rieske protein, while the 4 small subunits are PetG, PetL, PetM and PetN. The complex functions as a dimer. Requires heme as cofactor.

The protein localises to the plastid. It localises to the chloroplast thylakoid membrane. Functionally, component of the cytochrome b6-f complex, which mediates electron transfer between photosystem II (PSII) and photosystem I (PSI), cyclic electron flow around PSI, and state transitions. The protein is Cytochrome f (petA) of Mesostigma viride (Green alga).